Reading from the N-terminus, the 421-residue chain is Synaptotagmin-12 (421 aa).

Residues 1–18 (MAVDVAEYHLSVIKSPPG) lie on the Vesicular side of the membrane. Residues 19–39 (WEVGVYAAGALALLGIAAVSL) form a helical membrane-spanning segment. The Cytoplasmic portion of the chain corresponds to 40–421 (WKLWTSGSFP…VSMWHAVRRN (382 aa)). Residues Ser-97, Ser-99, and Ser-214 each carry the phosphoserine modification. C2 domains follow at residues 152 to 272 (TLGQ…SGWL) and 283 to 416 (AVGE…SMWH).

It belongs to the synaptotagmin family. Homodimer. Can also form heterodimers. Interacts with SYT1. Post-translationally, phosphorylation of Ser-97 is required for mossy-fiber long-term potentiation.

The protein resides in the cytoplasmic vesicle. The protein localises to the secretory vesicle. It localises to the synaptic vesicle membrane. Synaptic vesicle phosphoprotein that enhances spontaneous neurotransmitter release but does not effect induced neurotransmitter release. Unlike other synaptotagmins, it does not bind Ca(2+) or phospholipids. Essential for mossy-fiber long-term potentiation in the hippocampus. In Homo sapiens (Human), this protein is Synaptotagmin-12 (SYT12).